The sequence spans 267 residues: Regulatory protein RecX (267 aa).

Belongs to the RecX family.

It is found in the cytoplasm. Modulates RecA activity. This is Regulatory protein RecX from Staphylococcus carnosus (strain TM300).